Reading from the N-terminus, the 213-residue chain is mRNA-decapping protein OPG121 (213 aa).

Positions 16 and 50 each coordinate N(7)-methyl-GTP. Residues 30–209 (KDTHVFAACI…EYLSYIYNML (180 aa)) form the Nudix hydrolase domain. The Nudix box motif lies at 111–132 (GKLDKKESIKDCLRRELKEESD). Glu-126 serves as the catalytic Nucleophile. Positions 126 and 130 each coordinate Mg(2+). Asp-151 lines the N(7)-methyl-GTP pocket. Glu-183 serves as a coordination point for Mg(2+).

This sequence belongs to the Nudix hydrolase family. It depends on Mg(2+) as a cofactor. Requires Mn(2+) as cofactor.

It carries out the reaction a 5'-end (N(7)-methyl 5'-triphosphoguanosine)-guanosine in mRNA + H2O = a 5'-end phospho-guanosine in mRNA + N(7)-methyl-GDP + 2 H(+). In terms of biological role, decapping enzyme that remove the protective 5'-cap from both host and viral mRNAs to commit transcripts for decay by the cellular exonuclease XRN1. Accelerates viral and cellular mRNA turnover to eliminate competing host mRNAs and allow stage-specific synthesis of viral proteins. Acceleration of the turnover of cellular transcripts may even promote the shutoff of host protein synthesis. This chain is mRNA-decapping protein OPG121 (OPG121), found in Vaccinia virus (strain Western Reserve) (VACV).